Reading from the N-terminus, the 261-residue chain is Shikimate dehydrogenase (NADP(+)) (261 aa).

Residues S13 to S15 and T60 each bind shikimate. The Proton acceptor role is filled by K64. E76 is a binding site for NADP(+). Shikimate-binding residues include N85 and D100. Residues G122–A126, N143–R148, and I203 contribute to the NADP(+) site. Residue Y205 participates in shikimate binding. NADP(+) is bound at residue G226.

This sequence belongs to the shikimate dehydrogenase family. As to quaternary structure, homodimer.

It catalyses the reaction shikimate + NADP(+) = 3-dehydroshikimate + NADPH + H(+). Its pathway is metabolic intermediate biosynthesis; chorismate biosynthesis; chorismate from D-erythrose 4-phosphate and phosphoenolpyruvate: step 4/7. In terms of biological role, involved in the biosynthesis of the chorismate, which leads to the biosynthesis of aromatic amino acids. Catalyzes the reversible NADPH linked reduction of 3-dehydroshikimate (DHSA) to yield shikimate (SA). In Exiguobacterium sp. (strain ATCC BAA-1283 / AT1b), this protein is Shikimate dehydrogenase (NADP(+)).